We begin with the raw amino-acid sequence, 328 residues long: MFNFRLFSRRGKSLGLLAIVLLLFGFYSLKSSMPVYSNSIGSPSAHSSSYKGVSKAKTSPQDPDSVVMLIVSFDDHYDSSRSDSSSVFLDKVLSDRTEYALRHGYTLVHKKARDIQARYGVYGTWSIIPALRETLAEYPDAGWIWLLDAKAVIMNPSESLKDRVLKPEKLSQHLLLNSPIDPLKNYIRTRRKMDPSDVFVITTSDYNGISTRSLLIKNNNFAPFLLDAWNEPLLKSAGFDQAERSALSHLLEAHNTILDHVALVSPKVLNSYTNSAVDLNYEEGDFLVILQDCENAAACERIFDNYYQQRKLPAIKKQLSEETVDEQS.

Positions 1–32 are cleaved as a signal peptide; that stretch reads MFNFRLFSRRGKSLGLLAIVLLLFGFYSLKSS.

The protein belongs to the glycosyltransferase 34 family.

It is found in the endoplasmic reticulum. This is an uncharacterized protein from Schizosaccharomyces pombe (strain 972 / ATCC 24843) (Fission yeast).